The following is a 417-amino-acid chain: Tyrosine--tRNA ligase (417 aa).

Tyr-34 is a binding site for L-tyrosine. The short motif at 39–48 is the 'HIGH' region element; that stretch reads PSGDSLHIGH. L-tyrosine-binding residues include Tyr-165 and Gln-169. Residues 227–231 carry the 'KMSKS' region motif; the sequence is KFGKT. ATP is bound at residue Lys-230. The S4 RNA-binding domain occupies 349–415; that stretch reads ANIVDWLVDT…GKKNYTLAKV (67 aa).

The protein belongs to the class-I aminoacyl-tRNA synthetase family. TyrS type 1 subfamily. As to quaternary structure, homodimer.

It is found in the cytoplasm. The catalysed reaction is tRNA(Tyr) + L-tyrosine + ATP = L-tyrosyl-tRNA(Tyr) + AMP + diphosphate + H(+). In terms of biological role, catalyzes the attachment of tyrosine to tRNA(Tyr) in a two-step reaction: tyrosine is first activated by ATP to form Tyr-AMP and then transferred to the acceptor end of tRNA(Tyr). The chain is Tyrosine--tRNA ligase from Limosilactobacillus fermentum (strain NBRC 3956 / LMG 18251) (Lactobacillus fermentum).